Consider the following 1028-residue polypeptide: Exportin-T (1028 aa).

Belongs to the exportin family.

The protein resides in the nucleus. The protein localises to the cytoplasm. In terms of biological role, tRNA nucleus export receptor which facilitates tRNA translocation across the nuclear pore complex. Involved in pre-tRNA splicing, probably by affecting the interaction of pre-tRNA with splicing endonuclease. The polypeptide is Exportin-T (los1) (Aspergillus terreus (strain NIH 2624 / FGSC A1156)).